A 191-amino-acid polypeptide reads, in one-letter code: UPF0312 protein Sden_2128 (191 aa).

Positions 1–22 (MKKHLLASLLGASLLLPTAVNA) are cleaved as a signal peptide.

Belongs to the UPF0312 family. Type 1 subfamily.

It is found in the periplasm. This chain is UPF0312 protein Sden_2128, found in Shewanella denitrificans (strain OS217 / ATCC BAA-1090 / DSM 15013).